Here is a 155-residue protein sequence, read N- to C-terminus: MSKITEEVETIITPILDELNFELVEVEYTKEGKDHFLRISIDKEGGVNLNDCTLASEKISEAMDENDPIPDMYYLDVASPGAERPIKKEKDYHNAIDKPVFVSLYAPIEGDKEWLGILKAVDDDTITMEVKEKAKTKQIEIPRNKIAKARHAVMI.

The protein belongs to the RimP family.

It is found in the cytoplasm. In terms of biological role, required for maturation of 30S ribosomal subunits. This Staphylococcus haemolyticus (strain JCSC1435) protein is Ribosome maturation factor RimP.